The chain runs to 385 residues: Multidrug export protein AcrE (385 aa).

Residues M1–G23 form the signal peptide. C24 is lipidated: N-palmitoyl cysteine. C24 is lipidated: S-diacylglycerol cysteine. Residues A366–K385 form a disordered region. Over residues K373–K385 the composition is skewed to polar residues.

It belongs to the membrane fusion protein (MFP) (TC 8.A.1) family. In terms of assembly, part of the tripartite efflux system AcrEF-TolC, which is composed of an inner membrane transporter, AcrF, a periplasmic membrane fusion protein, AcrE, and an outer membrane component, TolC. The complex forms a large protein conduit and can translocate molecules across both the inner and outer membranes.

It localises to the cell inner membrane. Its function is as follows. Part of the tripartite efflux system AcrEF-TolC. Involved in the efflux of indole and organic solvents. The chain is Multidrug export protein AcrE (acrE) from Escherichia coli (strain K12).